A 472-amino-acid polypeptide reads, in one-letter code: ATP synthase subunit beta (472 aa).

ATP is bound at residue 157 to 164 (GGAGVGKT).

The protein belongs to the ATPase alpha/beta chains family. In terms of assembly, F-type ATPases have 2 components, CF(1) - the catalytic core - and CF(0) - the membrane proton channel. CF(1) has five subunits: alpha(3), beta(3), gamma(1), delta(1), epsilon(1). CF(0) has three main subunits: a(1), b(2) and c(9-12). The alpha and beta chains form an alternating ring which encloses part of the gamma chain. CF(1) is attached to CF(0) by a central stalk formed by the gamma and epsilon chains, while a peripheral stalk is formed by the delta and b chains.

It is found in the cell membrane. The catalysed reaction is ATP + H2O + 4 H(+)(in) = ADP + phosphate + 5 H(+)(out). In terms of biological role, produces ATP from ADP in the presence of a proton gradient across the membrane. The catalytic sites are hosted primarily by the beta subunits. This chain is ATP synthase subunit beta, found in Desulforamulus reducens (strain ATCC BAA-1160 / DSM 100696 / MI-1) (Desulfotomaculum reducens).